Here is a 307-residue protein sequence, read N- to C-terminus: GMP synthase [glutamine-hydrolyzing] subunit B (307 aa).

The region spanning methionine 1 to arginine 184 is the GMPS ATP-PPase domain. An ATP-binding site is contributed by serine 27–serine 33.

As to quaternary structure, heterodimer composed of a glutamine amidotransferase subunit (A) and a GMP-binding subunit (B).

It carries out the reaction XMP + L-glutamine + ATP + H2O = GMP + L-glutamate + AMP + diphosphate + 2 H(+). It functions in the pathway purine metabolism; GMP biosynthesis; GMP from XMP (L-Gln route): step 1/1. In terms of biological role, catalyzes the synthesis of GMP from XMP. The sequence is that of GMP synthase [glutamine-hydrolyzing] subunit B from Thermococcus kodakarensis (strain ATCC BAA-918 / JCM 12380 / KOD1) (Pyrococcus kodakaraensis (strain KOD1)).